The sequence spans 331 residues: Activator of 90 kDa heat shock protein ATPase homolog 2 (331 aa).

The protein belongs to the AHA1 family.

Co-chaperone that stimulates HSP90 ATPase activity. In Mus musculus (Mouse), this protein is Activator of 90 kDa heat shock protein ATPase homolog 2 (Ahsa2).